Consider the following 94-residue polypeptide: Late cornified envelope protein 3C (94 aa).

The segment covering 1 to 10 (MSCQQNQQQC) has biased composition (low complexity). Disordered stretches follow at residues 1–35 (MSCQ…PPSS) and 65–94 (CRRQ…GGCC). The segment covering 11–34 (QPPPSCPSPKCPPKSPAQCLPPPS) has biased composition (pro residues). A compositionally biased stretch (gly residues) spans 78-94 (GQQGGGSCRGHGSGGCC).

The protein belongs to the LCE family. In terms of assembly, interacts with CYSRT1; the interaction is direct. Skin-specific. Expression was readily detected in adult trunk skin, adult arm skin, fetal skin, penal skin, vulva, esophagus and tongue. Not expressed in the cervix, rectum, lung, colon, or placenta.

Its function is as follows. A structural component of the cornified envelope of the stratum corneum involved in innate cutaneous host defense. Possesses defensin-like antimicrobial activity against a broad spectrum of Gram-positive and Gram-negative bacteria, both aerobic and anaerobic species. Upon inflammation, may regulate skin barrier repair by shaping cutaneous microbiota composition and immune response to bacterial antigens. The sequence is that of Late cornified envelope protein 3C from Homo sapiens (Human).